The primary structure comprises 401 residues: Beta-lactamase (401 aa).

A signal peptide spans 1–39 (MKLFTSTLTAKKSSTHKPLISLALSVLISTLLISETAQA). S102 serves as the catalytic Acyl-ester intermediate. The Proton acceptor role is filled by Y188. 353–355 (KTG) provides a ligand contact to substrate.

The protein belongs to the class-C beta-lactamase family.

The protein resides in the secreted. The catalysed reaction is a beta-lactam + H2O = a substituted beta-amino acid. Its function is as follows. This protein is a serine beta-lactamase with a substrate specificity for cephalosporins. This Psychrobacter immobilis protein is Beta-lactamase (ampC).